The sequence spans 145 residues: Glycine-rich protein (145 aa).

An N-terminal signal peptide occupies residues 1–19 (MKLTLAVVVVFAYIATTNA).

As to expression, component of the acid-insoluble and acid-soluble organic matrix of calcified layers of the shell (at protein level).

Its subcellular location is the secreted. This chain is Glycine-rich protein, found in Lottia gigantea (Giant owl limpet).